Reading from the N-terminus, the 52-residue chain is MAVPKKRTSILKKRIRKNLWKKGGYWAALKAFSLAKSLATGNSKSFFCTTNK.

Belongs to the bacterial ribosomal protein bL32 family.

It is found in the plastid. Its subcellular location is the chloroplast. The polypeptide is Large ribosomal subunit protein bL32c (Citrus sinensis (Sweet orange)).